A 426-amino-acid polypeptide reads, in one-letter code: Dihydroorotase (426 aa).

Residues H58 and H60 each coordinate Zn(2+). Residues 60–62 (HLR) and N92 each bind substrate. Residues D150, H177, and H230 each contribute to the Zn(2+) site. Position 276 (N276) interacts with substrate. D303 provides a ligand contact to Zn(2+). D303 is an active-site residue. Residues H307 and 321-322 (FG) each bind substrate.

The protein belongs to the metallo-dependent hydrolases superfamily. DHOase family. Class I DHOase subfamily. Requires Zn(2+) as cofactor.

The catalysed reaction is (S)-dihydroorotate + H2O = N-carbamoyl-L-aspartate + H(+). It functions in the pathway pyrimidine metabolism; UMP biosynthesis via de novo pathway; (S)-dihydroorotate from bicarbonate: step 3/3. Its function is as follows. Catalyzes the reversible cyclization of carbamoyl aspartate to dihydroorotate. The chain is Dihydroorotase from Listeria monocytogenes serotype 4a (strain HCC23).